The primary structure comprises 428 residues: Sulfite exporter TauE/SafE family protein 6 (428 aa).

11 consecutive transmembrane segments (helical) span residues 1 to 21 (MKTLFVLFILILCVFAINANQ), 61 to 81 (ALVVAGVLCFTAALISSASGI), 82 to 102 (GDGFFFIPIMNLVAGIDLKAA), 105 to 125 (FSAFMVTGGSIANLINNHFGC), 128 to 148 (LIDYDLALLLEPCMLLGVSVG), 149 to 169 (VICNKVFPEWLITGLFVVFLM), 245 to 265 (YWILLSLQIPLALVFTILALS), 294 to 314 (VMSFLAGLLGGIFGIGGGMII), 332 to 352 (TSFMVFFSATMSGVQYLLLGM), 356 to 376 (EAAYVFSVICFFASTLGLVFA), and 388 to 408 (IIVFLVGTMMYLTTIVMASFG).

It belongs to the 4-toluene sulfonate uptake permease (TSUP) (TC 2.A.102) family.

The protein resides in the membrane. The polypeptide is Sulfite exporter TauE/SafE family protein 6 (Arabidopsis thaliana (Mouse-ear cress)).